Consider the following 1429-residue polypeptide: Dicer-like protein 2 (1429 aa).

Residues 21–200 enclose the Helicase ATP-binding domain; that stretch reads MFEASLKGNI…TIEMNLNSVC (180 aa). 34–41 is a binding site for ATP; the sequence is MGTGSGKT. A DEAH box motif is present at residues 141–144; sequence DEAH. In terms of domain architecture, Helicase C-terminal spans 335 to 501; that stretch reads ALISFLMSTE…EDRRRTEELR (167 aa). Residues 528–622 enclose the Dicer dsRNA-binding fold domain; that stretch reads AMQHLVHFCD…LPLTKSREFT (95 aa). RNase III domains follow at residues 874-1014 and 1056-1250; these read ATRL…IDGG and QENL…VDSG. Residues Glu1095, Asp1236, and Glu1239 each coordinate Mg(2+).

Belongs to the helicase family. Dicer subfamily. Mg(2+) is required as a cofactor. The cofactor is Mn(2+).

In terms of biological role, dicer-like endonuclease involved in cleaving double-stranded RNA in the RNA interference (RNAi) pathway. Produces 21 to 25 bp dsRNAs (siRNAs) which target the selective destruction of homologous RNAs leading to sequence-specific suppression of gene expression, called post-transcriptional gene silencing (PTGS). Part of a broad host defense response against viral infection and transposons. This is Dicer-like protein 2 (dcl2) from Emericella nidulans (strain FGSC A4 / ATCC 38163 / CBS 112.46 / NRRL 194 / M139) (Aspergillus nidulans).